The following is a 113-amino-acid chain: Small ribosomal subunit protein bS18 (113 aa).

A disordered region spans residues 1 to 41 (MSEEKIVNTEAAPEAVAERPARAERSERPERPAKGPFGKKR). Over residues 16 to 33 (VAERPARAERSERPERPA) the composition is skewed to basic and acidic residues.

The protein belongs to the bacterial ribosomal protein bS18 family. As to quaternary structure, part of the 30S ribosomal subunit. Forms a tight heterodimer with protein bS6.

Its function is as follows. Binds as a heterodimer with protein bS6 to the central domain of the 16S rRNA, where it helps stabilize the platform of the 30S subunit. This chain is Small ribosomal subunit protein bS18, found in Elusimicrobium minutum (strain Pei191).